The following is a 1009-amino-acid chain: Helicase-like transcription factor (1009 aa).

Omega-N-methylarginine is present on R27. A DNA-binding region spans residues 38–287 (EFQDVIPPDD…FSEKDRPENV (250 aa)). Residue K112 forms a Glycyl lysine isopeptide (Lys-Gly) (interchain with G-Cter in SUMO2) linkage. Y195 is subject to Phosphotyrosine; by JAK2. A Glycyl lysine isopeptide (Lys-Gly) (interchain with G-Cter in SUMO2) cross-link involves residue K211. 294–301 (DDMGLGKT) is a binding site for ATP. The interval 336–365 (DDSMKLGGNNTSEKADGLSKDASRCSEQPS) is disordered. Basic and acidic residues predominate over residues 348 to 359 (EKADGLSKDASR). Phosphoserine occurs at positions 397, 398, and 400. The Helicase ATP-binding domain maps to 435-606 (IEDVAFACAL…WSLLSFLKLK (172 aa)). The short motif at 557 to 560 (DEGH) is the DEGH box element. At T736 the chain carries Phosphothreonine. An RING-type zinc finger spans residues 760 to 801 (CAICLDSLTVPVITHCAHVFCKPCICQVIQNEQPHAKCPLCR). The Helicase C-terminal domain maps to 837–996 (ALMHALTDLR…TKKPNADEMK (160 aa)). The interval 925-1009 (SRVFLMDPAW…INEIRTLIDL (85 aa)) is interaction with SP1 and SP3.

This sequence belongs to the SNF2/RAD54 helicase family. RAD16 subfamily. Interacts with SP1 and SP3 independently of DNA; the interaction with these transcriptional factors may be required for basal transcription of target genes. Interacts with EGR1; the interaction requires prior binding to DNA and represses c-Rel via a DNA looping mechanism. Interacts with GATA4. Interacts with PCNA; the interaction promotes polyubiquitination of PCNA through association with the UBE2B-RAD18 and UBE2V2-UBE2N ubiquitin ligase complexes. Interacts with RAD18, SHPRH, UBE2V2 and UBE2N. Expressed in brain, heart, kidney, liver, lung, pancreas, placenta and skeletal muscle.

It localises to the cytoplasm. The protein localises to the nucleus. Its subcellular location is the nucleolus. It is found in the nucleoplasm. It carries out the reaction S-ubiquitinyl-[E2 ubiquitin-conjugating enzyme]-L-cysteine + [acceptor protein]-L-lysine = [E2 ubiquitin-conjugating enzyme]-L-cysteine + N(6)-ubiquitinyl-[acceptor protein]-L-lysine.. It participates in protein modification; protein ubiquitination. In terms of biological role, has both helicase and E3 ubiquitin ligase activities. Possesses intrinsic ATP-dependent nucleosome-remodeling activity; This activity may be required for transcriptional activation or repression of specific target promoters. These may include the SERPINE1 and HIV-1 promoters and the SV40 enhancer, to which this protein can bind directly. Plays a role in error-free postreplication repair (PRR) of damaged DNA and maintains genomic stability through acting as a ubiquitin ligase for 'Lys-63'-linked polyubiquitination of chromatin-bound PCNA. This chain is Helicase-like transcription factor (HLTF), found in Homo sapiens (Human).